The primary structure comprises 127 residues: Copper resistance protein C (127 aa).

Residues 1-25 (MFAFRSIATTVVMVAASLASASAFA) form the signal peptide. Cu cation-binding residues include histidine 26, methionine 65, methionine 68, methionine 71, methionine 76, and histidine 116.

Belongs to the CopC family.

The protein localises to the periplasm. In terms of biological role, copper-binding protein involved in copper resistance. The chain is Copper resistance protein C from Xanthomonas campestris pv. juglandis (Xanthomonas arboricola pv. juglandis).